The sequence spans 242 residues: Sugar fermentation stimulation protein homolog (242 aa).

It belongs to the SfsA family.

This Enterococcus mundtii protein is Sugar fermentation stimulation protein homolog.